The chain runs to 647 residues: Protein FAM161A (647 aa).

2 disordered regions span residues 32 to 55 and 143 to 175; these read RELGDRPHPSASVSPRGPARTSME and PAQHDHLKQSRSVSPSLAESSHESTDEDYGDSE. Residues 152–161 show a composition bias toward polar residues; that stretch reads SRSVSPSLAE. Coiled-coil stretches lie at residues 243-268 and 518-544; these read IKSKSEIELENNLLKEKLEEEAECQK and AIRKREKQRTKDYMKELEAMEQRVLNK. Disordered stretches follow at residues 504–524 and 588–647; these read QTPRSTESSKRREYAIRKREK and DEHV…IEEI. Composition is skewed to basic and acidic residues over residues 510–524 and 588–600; these read ESSKRREYAIRKREK and DEHVGVREEKKIP. The segment covering 613-638 has biased composition (acidic residues); sequence DLLDDEEDDKYDCESEEAEEEDAYST.

This sequence belongs to the FAM161 family.

The protein localises to the cytoplasm. The protein resides in the cytoskeleton. It is found in the cilium basal body. Its subcellular location is the cell projection. It localises to the cilium. The protein localises to the microtubule organizing center. The protein resides in the centrosome. It is found in the centriole. Functionally, involved in ciliogenesis. The polypeptide is Protein FAM161A (fam161a) (Xenopus laevis (African clawed frog)).